A 253-amino-acid chain; its full sequence is Rab GTPase-activating protein 1-like, isoform 10 (253 aa).

Positions 8–222 (SMTFEERENR…MNEIQAAKNS (215 aa)) form a coiled coil. The interval 233–253 (TATGTQPLQPAPVTQPPKEST) is disordered.

This Homo sapiens (Human) protein is Rab GTPase-activating protein 1-like, isoform 10 (RABGAP1L).